A 163-amino-acid polypeptide reads, in one-letter code: MVVQIRIGQGMDVHAFEEGDHVTLAGIKIPHTHGLKAHSDGDVVLHALSDALLGALALGDIGQHFPDTDVQFKGADSRVLLKHVYQLILDRGYALNNADITVACERPKLAKYNLEMRQSIADVLDVDVTQISVKATTTEKLGFTGRQEGILATATVLVSYQAK.

A divalent metal cation-binding residues include Asp-12 and His-14. Residues 12–14 and 38–39 each bind 4-CDP-2-C-methyl-D-erythritol 2-phosphate; these read DVH and HS. His-46 is an a divalent metal cation binding site. 4-CDP-2-C-methyl-D-erythritol 2-phosphate contacts are provided by residues 60-62, 65-69, 136-139, Phe-143, and Arg-146; these read DIG, FPDTD, and TTTE.

Belongs to the IspF family. Homotrimer. A divalent metal cation serves as cofactor.

It carries out the reaction 4-CDP-2-C-methyl-D-erythritol 2-phosphate = 2-C-methyl-D-erythritol 2,4-cyclic diphosphate + CMP. The protein operates within isoprenoid biosynthesis; isopentenyl diphosphate biosynthesis via DXP pathway; isopentenyl diphosphate from 1-deoxy-D-xylulose 5-phosphate: step 4/6. In terms of biological role, involved in the biosynthesis of isopentenyl diphosphate (IPP) and dimethylallyl diphosphate (DMAPP), two major building blocks of isoprenoid compounds. Catalyzes the conversion of 4-diphosphocytidyl-2-C-methyl-D-erythritol 2-phosphate (CDP-ME2P) to 2-C-methyl-D-erythritol 2,4-cyclodiphosphate (ME-CPP) with a corresponding release of cytidine 5-monophosphate (CMP). The protein is 2-C-methyl-D-erythritol 2,4-cyclodiphosphate synthase of Acinetobacter baylyi (strain ATCC 33305 / BD413 / ADP1).